Here is a 341-residue protein sequence, read N- to C-terminus: Uroporphyrinogen decarboxylase (341 aa).

Substrate-binding positions include 23 to 27 (RQAGR), Asp-73, Tyr-147, Ser-202, and His-318.

Belongs to the uroporphyrinogen decarboxylase family. As to quaternary structure, homodimer.

It is found in the cytoplasm. It carries out the reaction uroporphyrinogen III + 4 H(+) = coproporphyrinogen III + 4 CO2. It functions in the pathway porphyrin-containing compound metabolism; protoporphyrin-IX biosynthesis; coproporphyrinogen-III from 5-aminolevulinate: step 4/4. Its function is as follows. Catalyzes the decarboxylation of four acetate groups of uroporphyrinogen-III to yield coproporphyrinogen-III. In Erythrobacter litoralis (strain HTCC2594), this protein is Uroporphyrinogen decarboxylase.